Here is a 560-residue protein sequence, read N- to C-terminus: MHVQDKGGIGALTALSLLLVAVTMVTPTQAAYKLQERYSWNQLDFAFPNARLKEQAMASGDYIPQNALPVGVEHFGNRLFVTVPRWRDGIPATLTYINMDHSVTGSPELIPYPDWRANTAGDCANSITTAYRIKVDECGRLWVLDTGTVGIGNTTTNPCPYAVNVFDLTTNTRIRRYELPAADTNPNTFIANIAVDIGKNCDDAYAYFADELGYGLISYSWELNKSWRFSAHSYFFPDPLRGDFNVAGINFQWGEEGIFGMSLTPIRSDGYRTLYFSPLASHRQFAVSTRILRDETRIEDSYHDFVALDERGPNAHTTSRVMSDDGVELFNLIDQNAVGCWHSSMPYSPQFHGIVDRDDVGLVFPADVKIDENKNVWVLSDRMPVFLLSDLDYSDINFRIYTAPLATLIENTVCDLRNNAYGPPNTVSIPKQVGPGPRPGLSAVGPPLYTNQYRPVLPQKPQTSWGPSPPSRSYLPSLGASPGGPGQVVSSVSVSTNSVGPAGIEVPKAYVFNQHNGLNYETSGPHLFPTLQPTQSQVGGGLKTYVNARQSGWWHHQHQG.

A signal peptide spans 1-30; it reads MHVQDKGGIGALTALSLLLVAVTMVTPTQA. Residues Asn-153 and Asn-224 are each glycosylated (N-linked (GlcNAc...) asparagine). The interval 452–492 is disordered; the sequence is QYRPVLPQKPQTSWGPSPPSRSYLPSLGASPGGPGQVVSSV. The span at 471–480 shows a compositional bias: low complexity; that stretch reads SRSYLPSLGA.

The protein belongs to the major royal jelly protein family.

It is found in the secreted. Functionally, controls the pigmentation pattern of the adult cuticle and larval mouth parts. The sequence is that of Protein yellow (y) from Drosophila pseudoobscura pseudoobscura (Fruit fly).